The primary structure comprises 272 residues: Prephenate dehydratase (272 aa).

One can recognise a Prephenate dehydratase domain in the interval 4-179; the sequence is AVIYTLPKGT…NKTRFILIGK (176 aa). Positions 194–269 constitute an ACT domain; sequence IVFELKEDKP…TFINLLGKYP (76 aa).

Homodimer.

The enzyme catalyses prephenate + H(+) = 3-phenylpyruvate + CO2 + H2O. It participates in amino-acid biosynthesis; L-phenylalanine biosynthesis; phenylpyruvate from prephenate: step 1/1. With respect to regulation, inhibited by L-phenylalanine but not by L-tyrosine or L-tryptophan. In Methanocaldococcus jannaschii (strain ATCC 43067 / DSM 2661 / JAL-1 / JCM 10045 / NBRC 100440) (Methanococcus jannaschii), this protein is Prephenate dehydratase (pheA).